We begin with the raw amino-acid sequence, 383 residues long: PqqA peptide cyclase (383 aa).

The Radical SAM core domain maps to 11-226 (PGPPLWLLAE…TNQWREKLAA (216 aa)). Residues cysteine 25, cysteine 29, and cysteine 32 each contribute to the [4Fe-4S] cluster site.

The protein belongs to the radical SAM superfamily. PqqE family. In terms of assembly, interacts with PqqD. The interaction is necessary for activity of PqqE. [4Fe-4S] cluster is required as a cofactor.

It catalyses the reaction [PQQ precursor protein] + S-adenosyl-L-methionine = E-Y cross-linked-[PQQ precursor protein] + 5'-deoxyadenosine + L-methionine + H(+). The protein operates within cofactor biosynthesis; pyrroloquinoline quinone biosynthesis. Catalyzes the cross-linking of a glutamate residue and a tyrosine residue in the PqqA protein as part of the biosynthesis of pyrroloquinoline quinone (PQQ). The chain is PqqA peptide cyclase from Azotobacter vinelandii (strain DJ / ATCC BAA-1303).